A 744-amino-acid polypeptide reads, in one-letter code: Elongation factor G, mitochondrial (744 aa).

The 278-residue stretch at 39 to 316 (EKIRNIGISA…AVIDYLPNPG (278 aa)) folds into the tr-type G domain. GTP-binding positions include 48–55 (AHIDSGKT), 115–119 (DTPGH), and 169–172 (NKLD). Residues 725-735 (VRQYQETQGAS) show a composition bias toward polar residues. Residues 725-744 (VRQYQETQGASQPDKKKKKN) form a disordered region.

Belongs to the TRAFAC class translation factor GTPase superfamily. Classic translation factor GTPase family. EF-G/EF-2 subfamily.

The protein localises to the mitochondrion. It participates in protein biosynthesis; polypeptide chain elongation. Mitochondrial GTPase that catalyzes the GTP-dependent ribosomal translocation step during translation elongation. During this step, the ribosome changes from the pre-translocational (PRE) to the post-translocational (POST) state as the newly formed A-site-bound peptidyl-tRNA and P-site-bound deacylated tRNA move to the P and E sites, respectively. Catalyzes the coordinated movement of the two tRNA molecules, the mRNA and conformational changes in the ribosome. Essential during development as it acts as a retrograde signal from mitochondria to the nucleus to slow down cell proliferation if mitochondrial energy output is low. This is Elongation factor G, mitochondrial from Drosophila pseudoobscura pseudoobscura (Fruit fly).